Reading from the N-terminus, the 498-residue chain is Type II secretion system protein E (498 aa).

Cys-394, Cys-397, Cys-425, and Cys-428 together coordinate Zn(2+).

It belongs to the GSP E family. Forms homooligomers; most probably hexamers. Interacts with OutL/GspL. The cofactor is Zn(2+).

It localises to the cell inner membrane. The enzyme catalyses ATP + H2O + cellular proteinSide 1 = ADP + phosphate + cellular proteinSide 2.. In terms of biological role, ATPase component of the type II secretion system required for the energy-dependent secretion of extracellular factors such as proteases and toxins from the periplasm. Acts as a molecular motor to provide the energy that is required for assembly of the pseudopilus and the extrusion of substrates generated in the cytoplasm. The sequence is that of Type II secretion system protein E (outE) from Dickeya dadantii (strain 3937) (Erwinia chrysanthemi (strain 3937)).